Here is a 258-residue protein sequence, read N- to C-terminus: NAD kinase (258 aa).

D51 (proton acceptor) is an active-site residue. Residues 51-52 (DG), R56, 119-120 (ND), K130, D149, 160-165 (TAYSLS), and A184 each bind NAD(+).

The protein belongs to the NAD kinase family. The cofactor is a divalent metal cation.

The protein resides in the cytoplasm. It carries out the reaction NAD(+) + ATP = ADP + NADP(+) + H(+). Functionally, involved in the regulation of the intracellular balance of NAD and NADP, and is a key enzyme in the biosynthesis of NADP. Catalyzes specifically the phosphorylation on 2'-hydroxyl of the adenosine moiety of NAD to yield NADP. The protein is NAD kinase of Thermotoga neapolitana (strain ATCC 49049 / DSM 4359 / NBRC 107923 / NS-E).